Here is a 433-residue protein sequence, read N- to C-terminus: Probable dipeptidase (433 aa).

Cysteine 20 is an active-site residue.

It belongs to the peptidase C69 family.

The enzyme catalyses an L-aminoacyl-L-amino acid + H2O = 2 an L-alpha-amino acid. The polypeptide is Probable dipeptidase (pipD) (Salmonella dublin).